Reading from the N-terminus, the 84-residue chain is Large ribosomal subunit protein bL27 (84 aa).

The tract at residues 1–22 (MAHKKAGGSTRNGRDSESKRLG) is disordered.

The protein belongs to the bacterial ribosomal protein bL27 family.

The polypeptide is Large ribosomal subunit protein bL27 (Shewanella loihica (strain ATCC BAA-1088 / PV-4)).